Consider the following 78-residue polypeptide: D-alanyl carrier protein (78 aa).

Positions 1–78 (MEFRDQVLDL…KIVAVLEELR (78 aa)) constitute a Carrier domain. An O-(pantetheine 4'-phosphoryl)serine modification is found at serine 36.

The protein belongs to the DltC family. Post-translationally, 4'-phosphopantetheine is transferred from CoA to a specific serine of apo-DCP.

The protein resides in the cytoplasm. The protein operates within cell wall biogenesis; lipoteichoic acid biosynthesis. Functionally, carrier protein involved in the D-alanylation of lipoteichoic acid (LTA). The loading of thioester-linked D-alanine onto DltC is catalyzed by D-alanine--D-alanyl carrier protein ligase DltA. The DltC-carried D-alanyl group is further transferred to cell membrane phosphatidylglycerol (PG) by forming an ester bond, probably catalyzed by DltD. D-alanylation of LTA plays an important role in modulating the properties of the cell wall in Gram-positive bacteria, influencing the net charge of the cell wall. The chain is D-alanyl carrier protein from Staphylococcus saprophyticus subsp. saprophyticus (strain ATCC 15305 / DSM 20229 / NCIMB 8711 / NCTC 7292 / S-41).